A 1336-amino-acid chain; its full sequence is Immunoglobulin superfamily member 1 (1336 aa).

Residues M1–G28 form the signal peptide. At M29 to N518 the chain is on the extracellular side. 5 consecutive Ig-like C2-type domains span residues P38 to E122, Q137 to A222, P226 to L312, P321 to N408, and P419 to E500. N53 carries an N-linked (GlcNAc...) asparagine glycan. C58 and C106 are oxidised to a cystine. A disulfide bond links C248 and C296. N-linked (GlcNAc...) asparagine glycans are attached at residues N338, N374, and N381. 2 cysteine pairs are disulfide-bonded: C343-C392 and C441-C484. Residues E519–I539 traverse the membrane as a helical segment. The Cytoplasmic segment spans residues R540 to G559. The helical transmembrane segment at V560 to I580 threads the bilayer. Residues E581–I1336 are Extracellular-facing. Ig-like C2-type domains are found at residues T589 to L677, P686 to K760, P777 to T869, P873 to M958, T965 to V1060, P1065 to D1150, and P1161 to D1242. Residues N607, N747, N798, N846, N939, N986, N1027, and N1082 are each glycosylated (N-linked (GlcNAc...) asparagine). A disulfide bond links C703 and C750. 2 disulfides stabilise this stretch: C799/C849 and C895/C942. C1087 and C1134 are oxidised to a cystine. N1147 and N1223 each carry an N-linked (GlcNAc...) asparagine glycan. Cysteines 1183 and 1226 form a disulfide. The tract at residues C1308 to I1336 is disordered. Residues P1317–I1328 show a composition bias toward polar residues.

Interacts with INHA. In PubMed:12385827 does not interact with INHA; standard receptor binding assay. Interacts with ACVR1B; the interaction appears to be ligand-dependent as it is diminished by inhibin B and activin A. Interacts with ACVR2A, ACVR2B, ACVRL1 and BMPR1B. Interacts with HECTD1. As to expression, highly expressed in pancreas, testis and fetal liver. Moderately expressed in heart, prostate and small intestine. Expressed at very low levels in brain, thymus, ovary, colon, fetal lung and fetal kidney. Expressed in muscle. Isoform 3 is expressed in pituitary gland.

The protein resides in the membrane. It is found in the secreted. In terms of biological role, seems to be a coreceptor in inhibin signaling, but seems not to be a high-affinity inhibin receptor. Antagonizes activin A signaling in the presence or absence of inhibin B. Necessary to mediate a specific antagonistic effect of inhibin B on activin-stimulated transcription. This is Immunoglobulin superfamily member 1 (IGSF1) from Homo sapiens (Human).